A 245-amino-acid chain; its full sequence is Thiopurine S-methyltransferase (245 aa).

29–40 (WREKWVDGKIGF) lines the S-adenosyl-L-methionine pocket. F40 lines the substrate pocket. At K58 the chain carries N6-acetyllysine. Residues L69, E90, and R152 each coordinate S-adenosyl-L-methionine.

The protein belongs to the class I-like SAM-binding methyltransferase superfamily. TPMT family. In terms of assembly, monomer.

The protein resides in the cytoplasm. It catalyses the reaction S-adenosyl-L-methionine + a thiopurine = S-adenosyl-L-homocysteine + a thiopurine S-methylether.. The chain is Thiopurine S-methyltransferase (TPMT) from Panthera leo (Lion).